Reading from the N-terminus, the 267-residue chain is Glutamate racemase (267 aa).

Residues 9-10 (DS) and 41-42 (YS) each bind substrate. Residue Cys-73 is the Proton donor/acceptor of the active site. 74 to 75 (NT) provides a ligand contact to substrate. Catalysis depends on Cys-184, which acts as the Proton donor/acceptor. Position 185–186 (185–186 (TH)) interacts with substrate.

It belongs to the aspartate/glutamate racemases family.

It catalyses the reaction L-glutamate = D-glutamate. The protein operates within cell wall biogenesis; peptidoglycan biosynthesis. Provides the (R)-glutamate required for cell wall biosynthesis. The chain is Glutamate racemase from Actinobacillus pleuropneumoniae serotype 7 (strain AP76).